Consider the following 261-residue polypeptide: Small ribosomal subunit protein uS3 (261 aa).

The KH type-2 domain occupies 39–107; that stretch reads VREYLKRKLA…PVHVSIEEIR (69 aa). The segment at 213-261 is disordered; that stretch reads QPVAEEPAADDRRPRRTPGRPDGDKPRTRTVKKVDGAADPAKRVRKAGA. The segment covering 221–254 has biased composition (basic and acidic residues); sequence ADDRRPRRTPGRPDGDKPRTRTVKKVDGAADPAK.

Belongs to the universal ribosomal protein uS3 family. Part of the 30S ribosomal subunit. Forms a tight complex with proteins S10 and S14.

Its function is as follows. Binds the lower part of the 30S subunit head. Binds mRNA in the 70S ribosome, positioning it for translation. In Dechloromonas aromatica (strain RCB), this protein is Small ribosomal subunit protein uS3.